We begin with the raw amino-acid sequence, 606 residues long: Kelch-like protein 41 (606 aa).

Ser3 is modified (phosphoserine). In terms of domain architecture, BTB spans 33-100 (IDCTLKAGDK…LYSASIDLND (68 aa)). Residues 135 to 237 (CLAILRLGLL…AEKYFKDHVE (103 aa)) form the BACK domain. Kelch repeat units follow at residues 346–398 (QVYV…EVDD), 399–447 (KIYV…SHNG), 448–495 (MIYC…IHKG), 497–542 (IVIA…SLAG), and 544–599 (LYAI…TRLN).

In terms of assembly, interacts with NRAP. Part of a complex that contains CUL3, RBX1 and KLHL41. Interacts with LASP1. Post-translationally, ubiquitinated by E3 ubiquitin ligase complex formed by CUL3 and RBX1 and probably targeted for proteasome-independent degradation. Quinone-induced oxidative stress increases its ubiquitination. Skeletal muscle. Localized between laterally fusing myofibrils in skeletal muscle (at protein level). Expressed at a lower level in the heart compared to skeletal muscle.

Its subcellular location is the cytoplasm. It is found in the cytoskeleton. The protein localises to the cell projection. The protein resides in the pseudopodium. It localises to the ruffle. Its subcellular location is the myofibril. It is found in the sarcomere. The protein localises to the m line. The protein resides in the sarcoplasmic reticulum membrane. It localises to the endoplasmic reticulum membrane. Functionally, involved in skeletal muscle development and differentiation. Regulates proliferation and differentiation of myoblasts and plays a role in myofibril assembly by promoting lateral fusion of adjacent thin fibrils into mature, wide myofibrils. Required for pseudopod elongation in transformed cells. The protein is Kelch-like protein 41 (Klhl41) of Mus musculus (Mouse).